A 229-amino-acid chain; its full sequence is MAKLTKKMKAIKAGVDSTKAYEINEAIAVLKQFATAKFVESVDVAVNLGIDPRKSDQNVRGATVLPHGTGREVRVAVFTQGANADAAKEAGADLVGMEDLAEQIKKGEMNFDVVIASPDAMRVVGQLGQVLGPRGLMPNPKVGTVTPNVAEAVKNAKSGQIRYRNDKNGIIHTTIGKANFSEVQLKENLQALLAALNKAKPTTAKGIFIKKVSISTTMGAGVAVDQASL.

The protein belongs to the universal ribosomal protein uL1 family. Part of the 50S ribosomal subunit.

In terms of biological role, binds directly to 23S rRNA. The L1 stalk is quite mobile in the ribosome, and is involved in E site tRNA release. Its function is as follows. Protein L1 is also a translational repressor protein, it controls the translation of the L11 operon by binding to its mRNA. The sequence is that of Large ribosomal subunit protein uL1 from Haemophilus influenzae (strain 86-028NP).